The primary structure comprises 253 residues: POU Class 2 homeobox-associating factor 3 (253 aa).

In terms of domain architecture, OCA spans 5–27 (PKVYQGVRVKMTVKELLQQRRAH).

Belongs to the POU2AF family. In terms of assembly, interacts with POU2F3 in a DNA-dependent manner; this interaction increases POU2F3 transactivation activity. Expressed in tuft cells.

It is found in the cytoplasm. The protein localises to the nucleus. Functionally, transcriptional coactivator that specifically associates with POU2F3. This complex drives the development of tuft cells, a rare a rare chemosensory cells that coordinate immune and neural functions within mucosal epithelial tissues. The protein is POU Class 2 homeobox-associating factor 3 of Mus musculus (Mouse).